Reading from the N-terminus, the 608-residue chain is Auxin response factor 3 (608 aa).

The interval 1–40 (MGGLIDLNVMETEEDETQTQTPSSASGSVSPTSSSSASVS) is disordered. Over residues 18-40 (QTQTPSSASGSVSPTSSSSASVS) the composition is skewed to low complexity. The segment at residues 159-261 (FCKTLTASDT…KLRLGVRRAS (103 aa)) is a DNA-binding region (TF-B3).

The protein belongs to the ARF family. As to quaternary structure, homo and heterodimers. In terms of tissue distribution, expressed in the whole plant.

The protein localises to the nucleus. In terms of biological role, auxin response factors (ARFs) are transcriptional factors that bind specifically to the DNA sequence 5'-TGTCTC-3' found in the auxin-responsive promoter elements (AuxREs). Could act as transcriptional activator or repressor. Formation of heterodimers with Aux/IAA proteins may alter their ability to modulate early auxin response genes expression. Involved in the establishment or elaboration of tissue patterning during gynoecial development. This is Auxin response factor 3 (ARF3) from Arabidopsis thaliana (Mouse-ear cress).